A 359-amino-acid polypeptide reads, in one-letter code: Probable tyrosine-protein phosphatase pir-2 (359 aa).

The Tyrosine-protein phosphatase domain maps to 16–191; the sequence is QPVGNVIPRT…AKDKRDKQVD (176 aa). Cys-131 functions as the Phosphocysteine intermediate in the catalytic mechanism. Residues 184 to 199 are compositionally biased toward basic and acidic residues; that stretch reads DKRDKQVDSDSDSSER. 3 disordered regions span residues 184–211, 234–259, and 274–328; these read DKRDKQVDSDSDSSERQRKKKNKRKHRE, SVSGTDYQNSPNGVSVDPGQPQPHHW, and PVAN…RNRM. A compositionally biased stretch (basic residues) spans 200–210; sequence QRKKKNKRKHR. Residues 234-246 show a composition bias toward polar residues; that stretch reads SVSGTDYQNSPNG. Acidic residues predominate over residues 290–309; it reads PQEEEEFEEDFEEIEEETET. Positions 319 to 328 are enriched in basic residues; that stretch reads SKRRARRNRM.

It belongs to the protein-tyrosine phosphatase family. Non-receptor class CDC14 subfamily.

The enzyme catalyses O-phospho-L-tyrosyl-[protein] + H2O = L-tyrosyl-[protein] + phosphate. The chain is Probable tyrosine-protein phosphatase pir-2 from Caenorhabditis elegans.